Here is a 151-residue protein sequence, read N- to C-terminus: Inactive oocyte-specific homeobox protein 2 (151 aa).

Positions 1–97 (MAEGPSLHPK…PMASRKFRKE (97 aa)) are disordered. A compositionally biased stretch (polar residues) spans 37 to 54 (MRQSPLVTPGSTTKSSLS).

The protein belongs to the paired homeobox family. Obox subfamily. Specifically expressed in oocytes and early embryos.

In terms of biological role, in contrast to other Obox family proteins, displays a truncated homeobox domain and does not bind DNA. In Mus musculus (Mouse), this protein is Inactive oocyte-specific homeobox protein 2.